Reading from the N-terminus, the 553-residue chain is Glutamine--tRNA ligase (553 aa).

The 'HIGH' region motif lies at 34–44; that stretch reads PEPNGYLHIGH. ATP-binding positions include 35-37 and 41-47; these read EPN and HIGHAKS. The L-glutamine site is built by Asp67 and Tyr212. Residues Thr231, 261–262, and 269–271 contribute to the ATP site; these read RL and MSK. A 'KMSKS' region motif is present at residues 268-272; it reads IMSKR.

It belongs to the class-I aminoacyl-tRNA synthetase family. In terms of assembly, monomer.

It is found in the cytoplasm. The catalysed reaction is tRNA(Gln) + L-glutamine + ATP = L-glutaminyl-tRNA(Gln) + AMP + diphosphate. The chain is Glutamine--tRNA ligase from Tolumonas auensis (strain DSM 9187 / NBRC 110442 / TA 4).